Here is a 402-residue protein sequence, read N- to C-terminus: Arginine deiminase (402 aa).

Cysteine 391 serves as the catalytic Amidino-cysteine intermediate.

It belongs to the arginine deiminase family.

Its subcellular location is the cytoplasm. The enzyme catalyses L-arginine + H2O = L-citrulline + NH4(+). It participates in amino-acid degradation; L-arginine degradation via ADI pathway; carbamoyl phosphate from L-arginine: step 1/2. In Mycobacterium marinum (strain ATCC BAA-535 / M), this protein is Arginine deiminase.